The following is a 163-amino-acid chain: Beta-lactoglobulin-2 (163 aa).

2 disulfide bridges follow: cysteine 66–cysteine 161 and cysteine 106–cysteine 120.

It belongs to the calycin superfamily. Lipocalin family. As to quaternary structure, monomer.

The protein resides in the secreted. Its function is as follows. Lactoglobulin is the primary component of whey, it binds retinol and is probably involved in the transport of that molecule. The protein is Beta-lactoglobulin-2 (LGB2) of Felis catus (Cat).